The chain runs to 255 residues: Thiazole synthase (255 aa).

Lys96 functions as the Schiff-base intermediate with DXP in the catalytic mechanism. Residues Gly157, 184–185, and 206–207 each bind 1-deoxy-D-xylulose 5-phosphate; these read AG and NT.

The protein belongs to the ThiG family. As to quaternary structure, homotetramer. Forms heterodimers with either ThiH or ThiS.

The protein resides in the cytoplasm. It catalyses the reaction [ThiS sulfur-carrier protein]-C-terminal-Gly-aminoethanethioate + 2-iminoacetate + 1-deoxy-D-xylulose 5-phosphate = [ThiS sulfur-carrier protein]-C-terminal Gly-Gly + 2-[(2R,5Z)-2-carboxy-4-methylthiazol-5(2H)-ylidene]ethyl phosphate + 2 H2O + H(+). The protein operates within cofactor biosynthesis; thiamine diphosphate biosynthesis. Its function is as follows. Catalyzes the rearrangement of 1-deoxy-D-xylulose 5-phosphate (DXP) to produce the thiazole phosphate moiety of thiamine. Sulfur is provided by the thiocarboxylate moiety of the carrier protein ThiS. In vitro, sulfur can be provided by H(2)S. The protein is Thiazole synthase of Clostridium acetobutylicum (strain ATCC 824 / DSM 792 / JCM 1419 / IAM 19013 / LMG 5710 / NBRC 13948 / NRRL B-527 / VKM B-1787 / 2291 / W).